The sequence spans 291 residues: Gamma-gliadin B (291 aa).

Positions 1-19 (MKTLLILTILAMAITIATA) are cleaved as a signal peptide. Low complexity predominate over residues 38 to 81 (LQPHQPFSQQPQQIFPQPQQTFPHQPQQQFPQPQQPQQQFLQPR). Residues 38–137 (LQPHQPFSQQ…QSFPQQQPSL (100 aa)) form a disordered region. The span at 82-99 (QPFPQQPQQPYPQQPQQP) shows a compositional bias: pro residues. Composition is skewed to low complexity over residues 100 to 117 (FPQTQQPQQPFPQSKQPQ) and 125 to 137 (QPQQSFPQQQPSL).

This sequence belongs to the gliadin/glutenin family.

Functionally, gliadin is the major seed storage protein in wheat. This Triticum aestivum (Wheat) protein is Gamma-gliadin B.